Reading from the N-terminus, the 493-residue chain is 3-octaprenyl-4-hydroxybenzoate carboxy-lyase (493 aa).

A Mn(2+)-binding site is contributed by asparagine 172. Residues 175–177 (IYR), 189–191 (RWL), and 194–195 (RG) each bind prenylated FMN. Mn(2+) is bound at residue glutamate 238. Aspartate 287 functions as the Proton donor in the catalytic mechanism.

Belongs to the UbiD family. Homohexamer. The cofactor is prenylated FMN. Requires Mn(2+) as cofactor.

It is found in the cell membrane. It catalyses the reaction a 4-hydroxy-3-(all-trans-polyprenyl)benzoate + H(+) = a 2-(all-trans-polyprenyl)phenol + CO2. The protein operates within cofactor biosynthesis; ubiquinone biosynthesis. Catalyzes the decarboxylation of 3-octaprenyl-4-hydroxy benzoate to 2-octaprenylphenol, an intermediate step in ubiquinone biosynthesis. The sequence is that of 3-octaprenyl-4-hydroxybenzoate carboxy-lyase from Shewanella amazonensis (strain ATCC BAA-1098 / SB2B).